The sequence spans 358 residues: Fructose-bisphosphate aldolase (358 aa).

Position 61 (S61) interacts with D-glyceraldehyde 3-phosphate. The active-site Proton donor is D108. Positions 109, 143, 173, and 225 each coordinate Zn(2+). Dihydroxyacetone phosphate is bound at residue G226. H264 contacts Zn(2+). Dihydroxyacetone phosphate contacts are provided by residues 265–267 and 286–289; these read GGS and NIDT. 4 positions are modified to phosphothreonine: T289, T312, T340, and T342.

The protein belongs to the class II fructose-bisphosphate aldolase family. Homodimer. The cofactor is Zn(2+).

The catalysed reaction is beta-D-fructose 1,6-bisphosphate = D-glyceraldehyde 3-phosphate + dihydroxyacetone phosphate. The protein operates within carbohydrate degradation; glycolysis; D-glyceraldehyde 3-phosphate and glycerone phosphate from D-glucose: step 4/4. In terms of biological role, catalyzes the aldol condensation of dihydroxyacetone phosphate (DHAP or glycerone-phosphate) with glyceraldehyde 3-phosphate (G3P) to form fructose 1,6-bisphosphate (FBP) in gluconeogenesis and the reverse reaction in glycolysis. The protein is Fructose-bisphosphate aldolase (fba1) of Schizosaccharomyces pombe (strain 972 / ATCC 24843) (Fission yeast).